A 443-amino-acid polypeptide reads, in one-letter code: Trimethylamine monooxygenase (443 aa).

FAD contacts are provided by Asp37, Gln39, Leu45, and Trp46. Trp70 and Asn72 together coordinate NADP(+). FAD-binding residues include Asn72 and Val125. Residues Tyr170, Ser202, Ser203, Ser205, and Arg226 each coordinate NADP(+). FAD contacts are provided by Gln315 and Thr318. Position 409 (Arg409) interacts with NADP(+).

Belongs to the FMO family. FAD serves as cofactor.

The enzyme catalyses trimethylamine + NADPH + O2 = trimethylamine N-oxide + NADP(+) + H2O. Catalyzes the oxidation of trimethylamine (TMA) to produce trimethylamine N-oxide (TMAO). In vitro, has a broad substrate specificity, oxidizing many nitrogen- and sulfur-containing compounds, including dimethylamine (DMA), dimethylsulfide (DMS) and dimethylsulfoxide (DMSO). The sequence is that of Trimethylamine monooxygenase from Pelagibacter ubique (strain HTCC1002).